The following is an 80-amino-acid chain: Serine palmitoyltransferase small subunit B (80 aa).

The Cytoplasmic portion of the chain corresponds to 1–11 (MDVKHIKDYLS). The helical transmembrane segment at 12–29 (WLYYQYLLITCSYVLEPW) threads the bilayer. At 30–36 (EQSIFNT) the chain is on the lumenal side. Residues 37–57 (LLLTIIAMVIYSSYIFIPIHV) form a helical membrane-spanning segment. Topologically, residues 58-80 (RLAVEFFSGIFGGQHESTVALMS) are cytoplasmic.

This sequence belongs to the SPTSS family. SPTSSB subfamily. As to quaternary structure, component of the serine palmitoyltransferase (SPT) complex, which is composed of SPTLC1, SPTLC2 or SPTLC3 and SPTSSA or SPTSSB. The heterodimer consisting of SPTLC1 and SPTLC2/SPTLC3 forms the catalytic core of the enzyme, while SPTSSA or SPTSSB subunits determine substrate specificity. SPT also interacts with ORMDL proteins, especially ORMDL3, which negatively regulate SPT activity in the presence of ceramides.

It is found in the endoplasmic reticulum membrane. It functions in the pathway lipid metabolism; sphingolipid metabolism. Component of the serine palmitoyltransferase multisubunit enzyme (SPT) that catalyzes the initial and rate-limiting step in sphingolipid biosynthesis by condensing L-serine and activated acyl-CoA (most commonly palmitoyl-CoA) to form long-chain bases. The SPT complex is composed of SPTLC1, SPTLC2 or SPTLC3 and SPTSSA or SPTSSB. Within this complex, the heterodimer consisting of SPTLC1 and SPTLC2/SPTLC3 forms the catalytic core. Within the SPT complex, SPTSSB stimulates the catalytic activity and plays a role in substrate specificity. SPT complexes with this subunit showing a preference for longer acyl-CoAs. The SPTLC1-SPTLC2-SPTSSB complex shows a strong preference for C18-CoA substrate, while the SPTLC1-SPTLC3-SPTSSB isozyme displays an ability to use a broader range of acyl-CoAs, without apparent preference. The protein is Serine palmitoyltransferase small subunit B (sptssb) of Xenopus tropicalis (Western clawed frog).